The primary structure comprises 125 residues: Small ribosomal subunit protein uS13 (125 aa).

The interval 93–125 (RKGLPVRGQRTKTNARTRKGPKRTVAGKKKAGR) is disordered.

Belongs to the universal ribosomal protein uS13 family. Part of the 30S ribosomal subunit. Forms a loose heterodimer with protein S19. Forms two bridges to the 50S subunit in the 70S ribosome.

Located at the top of the head of the 30S subunit, it contacts several helices of the 16S rRNA. In the 70S ribosome it contacts the 23S rRNA (bridge B1a) and protein L5 of the 50S subunit (bridge B1b), connecting the 2 subunits; these bridges are implicated in subunit movement. Contacts the tRNAs in the A and P-sites. In Paenarthrobacter aurescens (strain TC1), this protein is Small ribosomal subunit protein uS13.